We begin with the raw amino-acid sequence, 56 residues long: Large ribosomal subunit protein bL32 (56 aa).

Residues 1-23 form a disordered region; it reads MAVQQNKSTRSKRGMRRSHNALP. Basic residues predominate over residues 9-19; it reads TRSKRGMRRSH.

This sequence belongs to the bacterial ribosomal protein bL32 family.

The chain is Large ribosomal subunit protein bL32 from Blochmanniella floridana.